We begin with the raw amino-acid sequence, 380 residues long: Glucose-1-phosphate adenylyltransferase (380 aa).

Residues Tyr-100, Gly-165, 180 to 181, and Ser-191 contribute to the alpha-D-glucose 1-phosphate site; that span reads EK.

The protein belongs to the bacterial/plant glucose-1-phosphate adenylyltransferase family. As to quaternary structure, homotetramer.

The enzyme catalyses alpha-D-glucose 1-phosphate + ATP + H(+) = ADP-alpha-D-glucose + diphosphate. The protein operates within glycan biosynthesis; glycogen biosynthesis. Its function is as follows. Involved in the biosynthesis of ADP-glucose, a building block required for the elongation reactions to produce glycogen. Catalyzes the reaction between ATP and alpha-D-glucose 1-phosphate (G1P) to produce pyrophosphate and ADP-Glc. The sequence is that of Glucose-1-phosphate adenylyltransferase from Clostridium acetobutylicum (strain ATCC 824 / DSM 792 / JCM 1419 / IAM 19013 / LMG 5710 / NBRC 13948 / NRRL B-527 / VKM B-1787 / 2291 / W).